The sequence spans 445 residues: Trigger factor (445 aa).

Positions 162-247 (GDQVTIDAIG…IKAVHTAEPT (86 aa)) constitute a PPIase FKBP-type domain.

The protein belongs to the FKBP-type PPIase family. Tig subfamily.

The protein localises to the cytoplasm. It catalyses the reaction [protein]-peptidylproline (omega=180) = [protein]-peptidylproline (omega=0). Functionally, involved in protein export. Acts as a chaperone by maintaining the newly synthesized protein in an open conformation. Functions as a peptidyl-prolyl cis-trans isomerase. This is Trigger factor from Rickettsia conorii (strain ATCC VR-613 / Malish 7).